Here is a 103-residue protein sequence, read N- to C-terminus: Large ribosomal subunit protein uL24 (103 aa).

Belongs to the universal ribosomal protein uL24 family. Part of the 50S ribosomal subunit.

In terms of biological role, one of two assembly initiator proteins, it binds directly to the 5'-end of the 23S rRNA, where it nucleates assembly of the 50S subunit. One of the proteins that surrounds the polypeptide exit tunnel on the outside of the subunit. This chain is Large ribosomal subunit protein uL24, found in Listeria monocytogenes serotype 4a (strain HCC23).